The following is a 77-amino-acid chain: Large ribosomal subunit protein bL28 (77 aa).

The tract at residues 1-20 is disordered; the sequence is MSRVCQVTGKGPVTGNNISH.

The protein belongs to the bacterial ribosomal protein bL28 family.

The chain is Large ribosomal subunit protein bL28 from Pseudomonas fluorescens (strain Pf0-1).